A 169-amino-acid polypeptide reads, in one-letter code: Sorting nexin-24 (169 aa).

At Met1 the chain carries N-acetylmethionine. One can recognise a PX domain in the interval 1–125; the sequence is MEVYIPSFRH…SFDETESEES (125 aa). A 1,2-diacyl-sn-glycero-3-phospho-(1D-myo-inositol-3-phosphate) is bound by residues Arg38, Ser40, Lys61, and Arg74. Phosphoserine is present on residues Ser113 and Ser116.

This sequence belongs to the sorting nexin family.

Its subcellular location is the cytoplasmic vesicle membrane. Its function is as follows. May be involved in several stages of intracellular trafficking. The protein is Sorting nexin-24 (Snx24) of Rattus norvegicus (Rat).